Consider the following 156-residue polypeptide: Myosin regulatory light chain B, smooth adductor muscle (156 aa).

Residue A1 is modified to Blocked amino end (Ala). EF-hand domains follow at residues 15-50 (KQIQ…LGRT) and 84-119 (DTEE…MGDN). 4 residues coordinate Ca(2+): D28, N30, D32, and D39.

In molluscan muscle, calcium regulation is associated with myosin rather than with actin. Muscle myosin contains two types of light chains: the catalytic light chain, essential for ATPase activity, and the regulatory light chain, a calcium-binding protein responsible for Ca(2+) dependent binding and Ca(2+) dependent Mg-ATPase activity. In Mizuhopecten yessoensis (Japanese scallop), this protein is Myosin regulatory light chain B, smooth adductor muscle.